The sequence spans 359 residues: Quinolinate synthase (359 aa).

The iminosuccinate site is built by His81 and Ser99. [4Fe-4S] cluster is bound at residue Cys144. Iminosuccinate contacts are provided by residues 170 to 172 and Ser187; that span reads YVN. [4Fe-4S] cluster is bound at residue Cys229. Residues 255-257 and Thr272 contribute to the iminosuccinate site; that span reads HPE. Cys315 is a [4Fe-4S] cluster binding site.

This sequence belongs to the quinolinate synthase family. Type 2 subfamily. [4Fe-4S] cluster serves as cofactor.

It localises to the cytoplasm. The catalysed reaction is iminosuccinate + dihydroxyacetone phosphate = quinolinate + phosphate + 2 H2O + H(+). The protein operates within cofactor biosynthesis; NAD(+) biosynthesis; quinolinate from iminoaspartate: step 1/1. Its function is as follows. Catalyzes the condensation of iminoaspartate with dihydroxyacetone phosphate to form quinolinate. The polypeptide is Quinolinate synthase (Sinorhizobium medicae (strain WSM419) (Ensifer medicae)).